The following is a 422-amino-acid chain: Histidine--tRNA ligase (422 aa).

This sequence belongs to the class-II aminoacyl-tRNA synthetase family. In terms of assembly, homodimer.

Its subcellular location is the cytoplasm. It catalyses the reaction tRNA(His) + L-histidine + ATP = L-histidyl-tRNA(His) + AMP + diphosphate + H(+). In Aliivibrio fischeri (strain ATCC 700601 / ES114) (Vibrio fischeri), this protein is Histidine--tRNA ligase.